Reading from the N-terminus, the 138-residue chain is ATP synthase epsilon chain (138 aa).

It belongs to the ATPase epsilon chain family. In terms of assembly, F-type ATPases have 2 components, CF(1) - the catalytic core - and CF(0) - the membrane proton channel. CF(1) has five subunits: alpha(3), beta(3), gamma(1), delta(1), epsilon(1). CF(0) has three main subunits: a, b and c.

Its subcellular location is the cell inner membrane. Functionally, produces ATP from ADP in the presence of a proton gradient across the membrane. This is ATP synthase epsilon chain from Trichlorobacter lovleyi (strain ATCC BAA-1151 / DSM 17278 / SZ) (Geobacter lovleyi).